Consider the following 85-residue polypeptide: uncharacterized protein (85 aa).

The protein localises to the mitochondrion. This is an uncharacterized protein from Paramecium tetraurelia.